Reading from the N-terminus, the 295-residue chain is MPSEKDGAKKSLMQRLALKSRIAKETLSEFLGTFIMIVLGCSSIAQAVLSRERFGGIITINIGFASAVVMALYVTFGISGGHINPAVSFAMCAFGRMEWFKFPFYVGAQFLGAFVGAATVFGIYYDGLMAFAGGKLLVVGENATAFIFATYPAPFISTPGAFVDQVVSTMFLLLIVFAMFDSRNLGVPRGLEPVVIGLLIIVLSCSLGLNSGCAMNPARDLSPRLFTALAGWGFEVFTVGNNFWWIPVVGPMIGAFLGGLIYILFIQMHHSKLDPDMKAEPSENNLEKHELSVIM.

Over 1 to 24 (MPSEKDGAKKSLMQRLALKSRIAK) the chain is Cytoplasmic. The chain crosses the membrane as a helical span at residues 25–43 (ETLSEFLGTFIMIVLGCSS). At 44–57 (IAQAVLSRERFGGI) the chain is on the extracellular side. The helical transmembrane segment at 58–77 (ITINIGFASAVVMALYVTFG) threads the bilayer. Residues 78–79 (IS) lie on the Cytoplasmic side of the membrane. Positions 80 to 92 (GGHINPAVSFAMC) form an intramembrane region, discontinuously helical. The NPA 1 signature appears at 84–86 (NPA). Residues 93–98 (AFGRME) are Cytoplasmic-facing. A helical membrane pass occupies residues 99-123 (WFKFPFYVGAQFLGAFVGAATVFGI). Over 124 to 160 (YYDGLMAFAGGKLLVVGENATAFIFATYPAPFISTPG) the chain is Extracellular. The chain crosses the membrane as a helical span at residues 161 to 178 (AFVDQVVSTMFLLLIVFA). The Cytoplasmic portion of the chain corresponds to 179 to 190 (MFDSRNLGVPRG). Residues 191-207 (LEPVVIGLLIIVLSCSL) traverse the membrane as a helical segment. Residues 208–210 (GLN) lie on the Extracellular side of the membrane. An intramembrane region (discontinuously helical) is located at residues 211 to 225 (SGCAMNPARDLSPRL). The NPA 2 motif lies at 216 to 218 (NPA). At 226–243 (FTALAGWGFEVFTVGNNF) the chain is on the extracellular side. Residues 244 to 264 (WWIPVVGPMIGAFLGGLIYIL) traverse the membrane as a helical segment. The Cytoplasmic portion of the chain corresponds to 265-295 (FIQMHHSKLDPDMKAEPSENNLEKHELSVIM).

Belongs to the MIP/aquaporin (TC 1.A.8) family. Homotetramer; each monomer provides an independent glycerol/water pore. Detected in testis and liver. Detected in immature spermatocytes and in interstitial Leydig cells.

It localises to the cell membrane. It is found in the basolateral cell membrane. It catalyses the reaction H2O(in) = H2O(out). The catalysed reaction is glycerol(in) = glycerol(out). It carries out the reaction urea(in) = urea(out). The enzyme catalyses (S)-lactate(in) = (S)-lactate(out). It catalyses the reaction NH4(+)(in) = NH4(+)(out). The catalysed reaction is uracil(in) = uracil(out). It carries out the reaction adenine(out) = adenine(in). The enzyme catalyses 3-hydroxybutanoate(in) = 3-hydroxybutanoate(out). It catalyses the reaction D-sorbitol(in) = D-sorbitol(out). The catalysed reaction is D-mannitol(in) = D-mannitol(out). It carries out the reaction H2O2(out) = H2O2(in). The enzyme catalyses arsenite(in) = arsenite(out). It catalyses the reaction selenite(in) = selenite(out). Channel activity is inhibited by mercury ions and phloretin. Its function is as follows. Aquaglyceroporins form homotetrameric transmembrane channels, with each monomer independently mediating glycerol and water transport across the plasma membrane along their osmotic gradient. AQP9 is the primary route for glycerol uptake in hepatocytes, supporting hepatic gluconeogenesis. It exhibits broad specificity and may transport various small, non-charged solutes, including carbamides, polyols, purines, and pyrimidines. AQP9 may also facilitate hepatic urea extrusion. Due to its permeability to lactate, AQP9 might participate in the astrocyte-to-neuron lactate shuttle, supplying neurons with energy. Additionally, AQP9 is permeable to arsenite, contributing to arsenic excretion by the liver and providing partial protection against arsenic toxicity. It is also permeable to H2O2 in vivo. Could also be permeable to ammonium. This is Aquaporin-9 from Rattus norvegicus (Rat).